The chain runs to 363 residues: MNTPYSIEHLLNPALRNIATYKVEGGQQAEIKLNQNESPFDVPQWLKEEIIGEFIREPWNRYPDILPYRAMEAYANFVGVPAECVIMSNGSNEMLYTIFLACLGPGRKVLIPNPSFSLYEKLALLLQSDIVEVPMKSDLSFDVEAIMKAAHNEAVDVIVLSNPNNPTSTSMSYDAVRKIAESTQALVLVDEAYIEFSRERSMVDTIEELPNVVVLRTMSKALALAGIRIGFALANAPLMAEISKPKIPFASSRLAEITLMKVLANYRLVDEAVSAILSERDALYEQLRMMEGVSPFASDTNFLIVRVADANATFKRLYDKGILVRNVSGYHLMEGCLRCNVGLPEENRRLAEAFAELSVEVKG.

Lys-220 carries the N6-(pyridoxal phosphate)lysine modification.

Belongs to the class-II pyridoxal-phosphate-dependent aminotransferase family. Histidinol-phosphate aminotransferase subfamily. Homodimer. Pyridoxal 5'-phosphate serves as cofactor.

It carries out the reaction L-histidinol phosphate + 2-oxoglutarate = 3-(imidazol-4-yl)-2-oxopropyl phosphate + L-glutamate. It functions in the pathway amino-acid biosynthesis; L-histidine biosynthesis; L-histidine from 5-phospho-alpha-D-ribose 1-diphosphate: step 7/9. In Chlorobium chlorochromatii (strain CaD3), this protein is Histidinol-phosphate aminotransferase.